Here is a 280-residue protein sequence, read N- to C-terminus: Diaminopimelate epimerase (280 aa).

Substrate contacts are provided by asparagine 12, glutamine 45, and asparagine 65. Residue cysteine 74 is the Proton donor of the active site. Substrate is bound by residues 75-76, asparagine 163, asparagine 196, and 214-215; these read GN and ER. The Proton acceptor role is filled by cysteine 223. 224–225 is a binding site for substrate; the sequence is GT.

The protein belongs to the diaminopimelate epimerase family. As to quaternary structure, homodimer.

It localises to the cytoplasm. It carries out the reaction (2S,6S)-2,6-diaminopimelate = meso-2,6-diaminopimelate. The protein operates within amino-acid biosynthesis; L-lysine biosynthesis via DAP pathway; DL-2,6-diaminopimelate from LL-2,6-diaminopimelate: step 1/1. Functionally, catalyzes the stereoinversion of LL-2,6-diaminopimelate (L,L-DAP) to meso-diaminopimelate (meso-DAP), a precursor of L-lysine and an essential component of the bacterial peptidoglycan. This Shewanella sediminis (strain HAW-EB3) protein is Diaminopimelate epimerase.